A 122-amino-acid polypeptide reads, in one-letter code: uncharacterized protein (122 aa).

Residues 1–22 (MNMMRIFYIGLSGVGMMFSSMA) form the signal peptide.

This is an uncharacterized protein from Escherichia coli (strain K12).